A 172-amino-acid polypeptide reads, in one-letter code: MLNKREYYTKEDLLASSRGELFGKNGPTLPAPNMLMMDRVIKMTKNGGNYNKGFIEAELDIQSDMWFFNCHFIKDPVMPGCLGLDAMWQLVGFYLGWLGGEGKGRALGVKEVKFTGQILPTSKKVTYFIHFRRIINRKLIMGMADGEVSCDGKIIYTATDLKVGLFKNSTVF.

The active site involves H71.

It belongs to the thioester dehydratase family. FabA subfamily. As to quaternary structure, homodimer.

It localises to the cytoplasm. The catalysed reaction is a (3R)-hydroxyacyl-[ACP] = a (2E)-enoyl-[ACP] + H2O. The enzyme catalyses (3R)-hydroxydecanoyl-[ACP] = (2E)-decenoyl-[ACP] + H2O. It carries out the reaction (2E)-decenoyl-[ACP] = (3Z)-decenoyl-[ACP]. It functions in the pathway lipid metabolism; fatty acid biosynthesis. Its function is as follows. Necessary for the introduction of cis unsaturation into fatty acids. Catalyzes the dehydration of (3R)-3-hydroxydecanoyl-ACP to E-(2)-decenoyl-ACP and then its isomerization to Z-(3)-decenoyl-ACP. Can catalyze the dehydratase reaction for beta-hydroxyacyl-ACPs with saturated chain lengths up to 16:0, being most active on intermediate chain length. This Blochmanniella pennsylvanica (strain BPEN) protein is 3-hydroxydecanoyl-[acyl-carrier-protein] dehydratase.